A 293-amino-acid polypeptide reads, in one-letter code: Acetyl-coenzyme A carboxylase carboxyl transferase subunit beta (293 aa).

A CoA carboxyltransferase N-terminal domain is found at 29–293 (LWVKCSECSQ…GVNELVEANI (265 aa)). The Zn(2+) site is built by Cys-33, Cys-36, Cys-52, and Cys-55. Residues 33 to 55 (CSECSQVAYRKDLISNFNVCSNC) form a C4-type zinc finger.

It belongs to the AccD/PCCB family. In terms of assembly, acetyl-CoA carboxylase is a heterohexamer composed of biotin carboxyl carrier protein (AccB), biotin carboxylase (AccC) and two subunits each of ACCase subunit alpha (AccA) and ACCase subunit beta (AccD). The cofactor is Zn(2+).

It is found in the cytoplasm. The enzyme catalyses N(6)-carboxybiotinyl-L-lysyl-[protein] + acetyl-CoA = N(6)-biotinyl-L-lysyl-[protein] + malonyl-CoA. It functions in the pathway lipid metabolism; malonyl-CoA biosynthesis; malonyl-CoA from acetyl-CoA: step 1/1. Component of the acetyl coenzyme A carboxylase (ACC) complex. Biotin carboxylase (BC) catalyzes the carboxylation of biotin on its carrier protein (BCCP) and then the CO(2) group is transferred by the transcarboxylase to acetyl-CoA to form malonyl-CoA. In Prochlorococcus marinus (strain MIT 9215), this protein is Acetyl-coenzyme A carboxylase carboxyl transferase subunit beta.